The chain runs to 453 residues: MDLFGKKVLVIGMGKSGISSARFLKKHGAYVVAFDEKREDEMKTQQKETIRKFADELYFNDLPDAVVDTSDMVVISPGVPLTKRYITLAHKRGIEVIGEIELAYRFCRSKNIVAITGTNGKTTTTTLVGEILKKVFDNVIVCGNIGFPFIDYVESSTDDTIFVIEISSFQLETIKYFKPMVGCILNITPDHLNRHMNMDNYIRAKMRIFENIDQEGYSVLNMDNSITRDLIGCAKGTVITFSKNESDTQNSVFVDGDFIYRNFLGKVEKVMRKDDIFMPGEHNLENTLAAIGCVLPFEIQPSIIEKTLKEFKGVEHRIEFVREINGVRFYNDSKGTNTDASSKALNSFEVPIILIAGGYDKGESFEKFAKLISQKVKKVFLLGQTKQKIADQLQKIGYLNFEFVEDLKEAVKKSFEIAKEGDVVLLSPACASWDMFESYEQRGRLFKQYVNEL.

Gly117–Thr123 provides a ligand contact to ATP.

Belongs to the MurCDEF family.

The protein localises to the cytoplasm. The catalysed reaction is UDP-N-acetyl-alpha-D-muramoyl-L-alanine + D-glutamate + ATP = UDP-N-acetyl-alpha-D-muramoyl-L-alanyl-D-glutamate + ADP + phosphate + H(+). It participates in cell wall biogenesis; peptidoglycan biosynthesis. Functionally, cell wall formation. Catalyzes the addition of glutamate to the nucleotide precursor UDP-N-acetylmuramoyl-L-alanine (UMA). The sequence is that of UDP-N-acetylmuramoylalanine--D-glutamate ligase from Caldicellulosiruptor saccharolyticus (strain ATCC 43494 / DSM 8903 / Tp8T 6331).